Here is a 223-residue protein sequence, read N- to C-terminus: Ribonuclease T (223 aa).

Residues 20–194 (VVIDVETAGF…YDTEQTALLF (175 aa)) enclose the Exonuclease domain. Mg(2+)-binding residues include Asp23, Glu25, His181, and Asp186. The active-site Proton donor/acceptor is His181.

This sequence belongs to the RNase T family. Homodimer. Mg(2+) serves as cofactor.

Trims short 3' overhangs of a variety of RNA species, leaving a one or two nucleotide 3' overhang. Responsible for the end-turnover of tRNA: specifically removes the terminal AMP residue from uncharged tRNA (tRNA-C-C-A). Also appears to be involved in tRNA biosynthesis. This is Ribonuclease T from Cronobacter sakazakii (strain ATCC BAA-894) (Enterobacter sakazakii).